Reading from the N-terminus, the 262-residue chain is Glutamine-binding protein (262 aa).

A signal peptide spans 1 to 26 (MKRKTVWKIWITLALIALLSITALAG). Cys27 is lipidated: N-palmitoyl cysteine. The S-diacylglycerol cysteine moiety is linked to residue Cys27.

Belongs to the bacterial solute-binding protein 3 family.

It localises to the cell membrane. Functionally, involved in glutamine-transport system. Interacts with the glutamine-transport system GlnPQ. The sequence is that of Glutamine-binding protein (glnH) from Geobacillus stearothermophilus (Bacillus stearothermophilus).